Consider the following 599-residue polypeptide: UvrABC system protein C (599 aa).

One can recognise a GIY-YIG domain in the interval 19–95; the sequence is ESTGVYIFYD…IKKYRPIMNV (77 aa). A UVR domain is found at 206–241; sequence EEIIEKLYDQMQEYSKNLEFEKAAKIRDKIRLLQNL.

The protein belongs to the UvrC family. In terms of assembly, interacts with UvrB in an incision complex.

It is found in the cytoplasm. Its function is as follows. The UvrABC repair system catalyzes the recognition and processing of DNA lesions. UvrC both incises the 5' and 3' sides of the lesion. The N-terminal half is responsible for the 3' incision and the C-terminal half is responsible for the 5' incision. The sequence is that of UvrABC system protein C from Dictyoglomus thermophilum (strain ATCC 35947 / DSM 3960 / H-6-12).